The following is a 212-amino-acid chain: Protein G1-like7 (212 aa).

The span at 1–22 shows a compositional bias: low complexity; sequence MDPSGPGPSSAAAGGAPAVAAA. 2 disordered regions span residues 1 to 34 and 148 to 212; these read MDPS…RYES and KARG…PSAS. The ALOG domain maps to 31–158; sequence RYESQKRRDW…ARGIPYEKKK (128 aa). The short motif at 156-160 is the Nuclear localization signal element; that stretch reads KKKRK. Over residues 167–182 the composition is skewed to low complexity; that stretch reads PAGVEPSGSSSAAAAA. Over residues 183-194 the composition is skewed to gly residues; it reads AGGGDAGSGGGA. Over residues 195 to 212 the composition is skewed to low complexity; it reads AATTTAQPGGSGTAPSAS.

The protein belongs to the plant homeotic and developmental regulators ALOG protein family.

Its subcellular location is the nucleus. Probable transcription regulator that acts as a developmental regulator by promoting cell growth in response to light. This is Protein G1-like7 (G1L7) from Oryza sativa subsp. japonica (Rice).